A 187-amino-acid polypeptide reads, in one-letter code: Calcium and integrin-binding family member 2 (187 aa).

EF-hand domains follow at residues arginine 66–serine 101, proline 103–serine 138, and glutamate 144–phenylalanine 179. Ca(2+) contacts are provided by aspartate 116, asparagine 118, aspartate 120, aspartate 127, aspartate 157, aspartate 159, aspartate 161, lysine 163, and aspartate 168.

Monomer. Homodimer. Interacts with WHRN and MYO7A. Interacts with ITGA2B (via C-terminus cytoplasmic tail region); the interactions are stabilized/increased in a calcium and magnesium-dependent manner. Interacts with ITGA7 (via C-terminus cytoplasmic tail region); the interactions are stabilized/increased in a calcium and magnesium-dependent manner. Interacts with TMC1. Interacts with TMC2. As to expression, widely expressed.

It localises to the cytoplasm. The protein resides in the cell projection. The protein localises to the stereocilium. Its subcellular location is the photoreceptor inner segment. It is found in the cilium. It localises to the photoreceptor outer segment. The protein resides in the cell membrane. The protein localises to the sarcolemma. In terms of biological role, calcium- and integrin-binding protein that plays a role in intracellular calcium homeostasis. Acts as an auxiliary subunit of the sensory mechanoelectrical transduction (MET) channel in hair cells. Essential for mechanoelectrical transduction (MET) currents in auditory hair cells and thereby required for hearing. Regulates the function of hair cell mechanotransduction by controlling the distribution of transmembrane channel-like proteins TMC1 and TMC2, and by regulating the function of the MET channels in hair cells. Required for the maintenance of auditory hair cell stereocilia bundle morphology and function and for hair-cell survival in the cochlea. Critical for proper photoreceptor cell maintenance and function. Plays a role in intracellular calcium homeostasis by decreasing ATP-induced calcium release. The sequence is that of Calcium and integrin-binding family member 2 (CIB2) from Homo sapiens (Human).